The following is a 706-amino-acid chain: Choline transporter-like protein 2 (706 aa).

The Cytoplasmic segment spans residues 1–33 (MGDERPHYYGKHGTPQKYDPTFKGPIYNRGCTD). Thr-14 carries the phosphothreonine modification. A helical membrane pass occupies residues 34–54 (IICCVFLLLAIVGYVAVGIIA). Topologically, residues 55 to 232 (WTHGDPRKVI…RIFEDYTVSW (178 aa)) are extracellular. 2 N-linked (GlcNAc...) asparagine glycosylation sites follow: Asn-187 and Asn-200. The chain crosses the membrane as a helical span at residues 233-253 (YWIIIGLVIAMAMSLLFIILL). Residues 254 to 256 (RFL) are Cytoplasmic-facing. A helical transmembrane segment spans residues 257–277 (AGIMVWVMIIMVILVLGYGIF). At 278–315 (HCYMEYSRLRGEAGSDVSLVDLGFQTDFRVYLHLRQTW) the chain is on the extracellular side. The chain crosses the membrane as a helical span at residues 316 to 336 (LAFMIILSILEVIIILLLIFL). The Cytoplasmic segment spans residues 337 to 364 (RKRILIAIALIKEASRAVGYVMCSLLYP). A helical transmembrane segment spans residues 365 to 385 (LVTFFLLCLCIAYWASTAVFL). Residues 386-457 (STSNEAVYKI…FNAFMFFWLA (72 aa)) are Extracellular-facing. N-linked (GlcNAc...) asparagine glycosylation is present at Asn-417. The helical transmembrane segment at 458–480 (NFVLALGQVTLAGAFASYYWALR) threads the bilayer. At 481–504 (KPDDLPAFPLFSAFGRALRYHTGS) the chain is on the cytoplasmic side. Residues 505–525 (LAFGALILAIVQIIRVILEYL) form a helical membrane-spanning segment. At 526-563 (DQRLKAAENKFAKCLMTCLKCCFWCLEKFIKFLNRNAY) the chain is on the extracellular side. Residues 564-584 (IMIAIYGTNFCTSARNAFFLL) traverse the membrane as a helical segment. Over 585–599 (MRNIIRVAVLDKVTD) the chain is Cytoplasmic. The chain crosses the membrane as a helical span at residues 600 to 620 (FLFLLGKLLIVGSVGILAFFF). The Extracellular portion of the chain corresponds to 621 to 638 (FTHRIRIVQDTAPPLNYY). A helical transmembrane segment spans residues 639–659 (WVPILTVIVGSYLIAHGFFSV). The Cytoplasmic portion of the chain corresponds to 660–706 (YGMCVDTLFLCFLEDLERNDGSAERPYFMSSTLKKLLNKTNKKAAES).

The protein belongs to the CTL (choline transporter-like) family. In terms of assembly, interacts with COCH. Present in supporting cells of the inner ear (at protein level). In terms of tissue distribution, expressed in inner ear vestibular tissue.

The protein localises to the cell membrane. The protein resides in the mitochondrion outer membrane. The catalysed reaction is choline(out) + n H(+)(in) = choline(in) + n H(+)(out). It carries out the reaction ethanolamine(out) + n H(+)(in) = ethanolamine(in) + n H(+)(out). Functionally, choline/H+ antiporter, mainly in mitochodria. Also acts as a low-affinity ethanolamine/H+ antiporter, regulating the supply of extracellular ethanolamine (Etn) for the CDP-Etn pathway, redistribute intracellular Etn and balance the CDP-Cho and CDP-Etn arms of the Kennedy pathway. In terms of biological role, does not exhibit choline transporter activity. This Homo sapiens (Human) protein is Choline transporter-like protein 2.